The chain runs to 1151 residues: PPi-type phosphoenolpyruvate carboxykinase 1 (1151 aa).

A coiled-coil region spans residues 1083–1129; it reads RQKLEVAKLNKDLAYLNKTIAEKPRLAETLNKQIAAVKEELQYVSSE.

The protein belongs to the PPi-type phosphoenolpyruvate carboxykinase family. As to quaternary structure, monomer and trimer; forms heterotrimers with PEPCK2 and PEPCK3.

Its subcellular location is the cytoplasm. It localises to the cytosol. It carries out the reaction oxaloacetate + diphosphate = phosphoenolpyruvate + phosphate + CO2. Functionally, inorganic pyrophosphate (PPi)-dependent phosphoenolpyruvate carboxykinase, which regulates the carbon flow of the central metabolism by fixing CO(2) to phosphoenolpyruvate to produce oxaloacetate. Can also produce pyruvate and diphosphate from phosphoenolpyruvate and phosphate. In Entamoeba histolytica (strain ATCC 30459 / HM-1:IMSS / ABRM), this protein is PPi-type phosphoenolpyruvate carboxykinase 1.